Here is a 341-residue protein sequence, read N- to C-terminus: UDP-N-acetylenolpyruvoylglucosamine reductase (341 aa).

The 171-residue stretch at 15 to 185 folds into the FAD-binding PCMH-type domain; that stretch reads VTQSCLSLIE…TAVGLRLPKT (171 aa). Residue Arg-161 is part of the active site. Ser-231 (proton donor) is an active-site residue. Residue Glu-327 is part of the active site.

The protein belongs to the MurB family. Requires FAD as cofactor.

Its subcellular location is the cytoplasm. It catalyses the reaction UDP-N-acetyl-alpha-D-muramate + NADP(+) = UDP-N-acetyl-3-O-(1-carboxyvinyl)-alpha-D-glucosamine + NADPH + H(+). The protein operates within cell wall biogenesis; peptidoglycan biosynthesis. Functionally, cell wall formation. The chain is UDP-N-acetylenolpyruvoylglucosamine reductase from Shewanella oneidensis (strain ATCC 700550 / JCM 31522 / CIP 106686 / LMG 19005 / NCIMB 14063 / MR-1).